Reading from the N-terminus, the 855-residue chain is Envelope glycoprotein gp160 (855 aa).

The signal sequence occupies residues 1-31; the sequence is MKVKGTRRNYQHLWRWGTLLLGMLMICSATE. The Extracellular segment spans residues 32–683; it reads KLWVTVYYGV…ITNWLWYIKI (652 aa). C53 and C73 are oxidised to a cystine. N-linked (GlcNAc...) asparagine; by host glycans are attached at residues N87, N129, N140, N154, N158, N184, N190, N200, N233, N244, N265, N279, N292, N298, N304, N334, N341, N358, and N364. Cystine bridges form between C118-C208, C125-C199, C130-C155, C221-C250, and C231-C242. A V1 region spans residues 130–154; sequence CTDLGKATNTNSSNWKEEIKGEIKN. Residues 155-199 are V2; the sequence is CSFNITTSIRDKIQKENALFRNLDVVPIDNASTTTNYTNYRLIHC. The interval 299–332 is V3; that stretch reads CTRPNNNTRKSIYIGPGRAFHTTGRIIGDIRKAH. A disulfide bond links C299 and C333. A CD4-binding loop region spans residues 366-376; that stretch reads SSGGDPEIVMH. 2 disulfides stabilise this stretch: C380–C442 and C387–C415. Residues 387 to 415 form a V4 region; the sequence is CNTTQLFNNTWRLNHTEGTKGNDTIILPC. Residues N388, N394, N400, N408, N445, N458, and N461 are each glycosylated (N-linked (GlcNAc...) asparagine; by host). 2 V5 regions span residues 458 to 469 and 460 to 469; these read NVTNDTEVFRPG and TNDTEVFRPG. The tract at residues 510–531 is fusion peptide; that stretch reads AVGIVGAMFLGFLGAAGSTMGA. An immunosuppression region spans residues 573-591; it reads KQLQARVLAVERYLRDQQL. C597 and C603 form a disulfide bridge. N-linked (GlcNAc...) asparagine; by host glycans are attached at residues N610, N615, N624, and N636. Residues 632–666 are a coiled coil; it reads REIDNYTNTIYTLLEESQNQQEKNEQELLELDKWA. The segment at 661–682 is MPER; binding to GalCer; sequence ELDKWASLWNWFSITNWLWYIK. Residues 684 to 704 traverse the membrane as a helical segment; that stretch reads FIMIVGGLVGLRIVFAVLSIV. Residues 705–855 lie on the Cytoplasmic side of the membrane; it reads NRVRQGYSPL…IRQGLERLLL (151 aa). Positions 711–714 match the YXXL motif; contains endocytosis signal motif; the sequence is YSPL. Residues 720-739 form a disordered region; sequence LPVPRGPDRPDGIEEEGGER. C763 carries S-palmitoyl cysteine; by host lipidation. Positions 854-855 match the Di-leucine internalization motif motif; that stretch reads LL.

Belongs to the HIV-1 env protein family. In terms of assembly, the mature envelope protein (Env) consists of a homotrimer of non-covalently associated gp120-gp41 heterodimers. The resulting complex protrudes from the virus surface as a spike. There seems to be as few as 10 spikes on the average virion. Interacts with host CD4, CCR5 and CXCR4. Gp120 also interacts with the C-type lectins CD209/DC-SIGN and CLEC4M/DC-SIGNR (collectively referred to as DC-SIGN(R)). Gp120 and gp41 interact with GalCer. Gp120 interacts with host ITGA4/ITGB7 complex; on CD4+ T-cells, this interaction results in rapid activation of integrin ITGAL/LFA-1, which facilitates efficient cell-to-cell spreading of HIV-1. Gp120 interacts with cell-associated heparan sulfate; this interaction increases virus infectivity on permissive cells and may be involved in infection of CD4- cells. The mature envelope protein (Env) consists of a homotrimer of non-covalently associated gp120-gp41 heterodimers. The resulting complex protrudes from the virus surface as a spike. There seems to be as few as 10 spikes on the average virion. Highly glycosylated by host. The high number of glycan on the protein is reffered to as 'glycan shield' because it contributes to hide protein sequence from adaptive immune system. In terms of processing, palmitoylation of the transmembrane protein and of Env polyprotein (prior to its proteolytic cleavage) is essential for their association with host cell membrane lipid rafts. Palmitoylation is therefore required for envelope trafficking to classical lipid rafts, but not for viral replication. Post-translationally, specific enzymatic cleavages in vivo yield mature proteins. Envelope glycoproteins are synthesized as an inactive precursor that is heavily N-glycosylated and processed likely by host cell furin in the Golgi to yield the mature SU and TM proteins. The cleavage site between SU and TM requires the minimal sequence [KR]-X-[KR]-R. About 2 of the 9 disulfide bonds of gp41 are reduced by P4HB/PDI, following binding to CD4 receptor.

The protein resides in the virion membrane. Its subcellular location is the host cell membrane. It is found in the host endosome membrane. Functionally, oligomerizes in the host endoplasmic reticulum into predominantly trimers. In a second time, gp160 transits in the host Golgi, where glycosylation is completed. The precursor is then proteolytically cleaved in the trans-Golgi and thereby activated by cellular furin or furin-like proteases to produce gp120 and gp41. Attaches the virus to the host lymphoid cell by binding to the primary receptor CD4. This interaction induces a structural rearrangement creating a high affinity binding site for a chemokine coreceptor like CXCR4 and/or CCR5. Acts as a ligand for CD209/DC-SIGN and CLEC4M/DC-SIGNR, which are respectively found on dendritic cells (DCs), and on endothelial cells of liver sinusoids and lymph node sinuses. These interactions allow capture of viral particles at mucosal surfaces by these cells and subsequent transmission to permissive cells. HIV subverts the migration properties of dendritic cells to gain access to CD4+ T-cells in lymph nodes. Virus transmission to permissive T-cells occurs either in trans (without DCs infection, through viral capture and transmission), or in cis (following DCs productive infection, through the usual CD4-gp120 interaction), thereby inducing a robust infection. In trans infection, bound virions remain infectious over days and it is proposed that they are not degraded, but protected in non-lysosomal acidic organelles within the DCs close to the cell membrane thus contributing to the viral infectious potential during DCs' migration from the periphery to the lymphoid tissues. On arrival at lymphoid tissues, intact virions recycle back to DCs' cell surface allowing virus transmission to CD4+ T-cells. In terms of biological role, acts as a class I viral fusion protein. Under the current model, the protein has at least 3 conformational states: pre-fusion native state, pre-hairpin intermediate state, and post-fusion hairpin state. During fusion of viral and target intracellular membranes, the coiled coil regions (heptad repeats) assume a trimer-of-hairpins structure, positioning the fusion peptide in close proximity to the C-terminal region of the ectodomain. The formation of this structure appears to drive apposition and subsequent fusion of viral and target cell membranes. Complete fusion occurs in host cell endosomes and is dynamin-dependent, however some lipid transfer might occur at the plasma membrane. The virus undergoes clathrin-dependent internalization long before endosomal fusion, thus minimizing the surface exposure of conserved viral epitopes during fusion and reducing the efficacy of inhibitors targeting these epitopes. Membranes fusion leads to delivery of the nucleocapsid into the cytoplasm. The polypeptide is Envelope glycoprotein gp160 (Homo sapiens (Human)).